A 231-amino-acid polypeptide reads, in one-letter code: Orotate phosphoribosyltransferase (231 aa).

Residues Lys-27, 79 to 80 (YK), Arg-106, Lys-107, Lys-110, His-112, and 133 to 141 (DDVMTAGTA) contribute to the 5-phospho-alpha-D-ribose 1-diphosphate site. Positions 137 and 166 each coordinate orotate.

Belongs to the purine/pyrimidine phosphoribosyltransferase family. PyrE subfamily. Homodimer. Requires Mg(2+) as cofactor.

It catalyses the reaction orotidine 5'-phosphate + diphosphate = orotate + 5-phospho-alpha-D-ribose 1-diphosphate. The protein operates within pyrimidine metabolism; UMP biosynthesis via de novo pathway; UMP from orotate: step 1/2. Functionally, catalyzes the transfer of a ribosyl phosphate group from 5-phosphoribose 1-diphosphate to orotate, leading to the formation of orotidine monophosphate (OMP). This chain is Orotate phosphoribosyltransferase, found in Bifidobacterium adolescentis (strain ATCC 15703 / DSM 20083 / NCTC 11814 / E194a).